Here is a 238-residue protein sequence, read N- to C-terminus: Ribosomal RNA small subunit methyltransferase G (238 aa).

Residues Gly77, Phe82, 128-129 (AE), and Arg147 each bind S-adenosyl-L-methionine. A disordered region spans residues 219 to 238 (KETPNKYPRKPGTPNKLPIE).

This sequence belongs to the methyltransferase superfamily. RNA methyltransferase RsmG family.

The protein localises to the cytoplasm. Functionally, specifically methylates the N7 position of guanine in position 535 of 16S rRNA. The sequence is that of Ribosomal RNA small subunit methyltransferase G from Listeria monocytogenes serovar 1/2a (strain ATCC BAA-679 / EGD-e).